A 140-amino-acid polypeptide reads, in one-letter code: Nucleoside diphosphate kinase (140 aa).

ATP is bound by residues K10, F58, R86, T92, R103, and N113. Residue H116 is the Pros-phosphohistidine intermediate of the active site.

Belongs to the NDK family. In terms of assembly, homotetramer. Mg(2+) serves as cofactor.

It is found in the cytoplasm. The enzyme catalyses a 2'-deoxyribonucleoside 5'-diphosphate + ATP = a 2'-deoxyribonucleoside 5'-triphosphate + ADP. It carries out the reaction a ribonucleoside 5'-diphosphate + ATP = a ribonucleoside 5'-triphosphate + ADP. Major role in the synthesis of nucleoside triphosphates other than ATP. The ATP gamma phosphate is transferred to the NDP beta phosphate via a ping-pong mechanism, using a phosphorylated active-site intermediate. This chain is Nucleoside diphosphate kinase, found in Haemophilus influenzae (strain PittEE).